We begin with the raw amino-acid sequence, 476 residues long: Glutamate--tRNA ligase (476 aa).

Residues 9–19 carry the 'HIGH' region motif; that stretch reads PSPTGTLHLGT. The 'KMSKS' region signature appears at 248–252; sequence KLSKR. Lys-251 lines the ATP pocket.

It belongs to the class-I aminoacyl-tRNA synthetase family. Glutamate--tRNA ligase type 1 subfamily. As to quaternary structure, monomer.

It is found in the cytoplasm. It catalyses the reaction tRNA(Glu) + L-glutamate + ATP = L-glutamyl-tRNA(Glu) + AMP + diphosphate. Its function is as follows. Catalyzes the attachment of glutamate to tRNA(Glu) in a two-step reaction: glutamate is first activated by ATP to form Glu-AMP and then transferred to the acceptor end of tRNA(Glu). The chain is Glutamate--tRNA ligase from Prochlorococcus marinus (strain NATL2A).